Reading from the N-terminus, the 274-residue chain is AA9 family lytic polysaccharide monooxygenase A (274 aa).

An N-terminal signal peptide occupies residues 1–22 (MHVPQFISTGALLALLARPAAA). H23 contributes to the Cu(2+) binding site. C63 and C194 form a disulfide bridge. (1,4-beta-D-glucosyl)n is bound by residues G67, D98, and S100. H101 contributes to the Cu(2+) binding site. Position 174 (H174) interacts with O2. Residue D177 participates in (1,4-beta-D-glucosyl)n binding. Cu(2+) is bound at residue Y191.

The protein belongs to the polysaccharide monooxygenase AA9 family. Cu(2+) serves as cofactor.

Its subcellular location is the secreted. It carries out the reaction [(1-&gt;4)-beta-D-glucosyl]n+m + reduced acceptor + O2 = 4-dehydro-beta-D-glucosyl-[(1-&gt;4)-beta-D-glucosyl]n-1 + [(1-&gt;4)-beta-D-glucosyl]m + acceptor + H2O.. In terms of biological role, lytic polysaccharide monooxygenase (LPMO) that depolymerizes crystalline and amorphous polysaccharides via the oxidation of scissile alpha- or beta-(1-4)-glycosidic bonds, yielding C4 oxidation products. Catalysis by LPMOs requires the reduction of the active-site copper from Cu(II) to Cu(I) by a reducing agent and H(2)O(2) or O(2) as a cosubstrate. Cleaves a range of polysaccharides, including cellulose, xyloglucan, mixed-linkage glucan and glucomannan. The chain is AA9 family lytic polysaccharide monooxygenase A from Collariella virescens (Soil fungus).